We begin with the raw amino-acid sequence, 95 residues long: Small ribosomal subunit protein bS18 (95 aa).

It belongs to the bacterial ribosomal protein bS18 family. As to quaternary structure, part of the 30S ribosomal subunit. Forms a tight heterodimer with protein bS6.

In terms of biological role, binds as a heterodimer with protein bS6 to the central domain of the 16S rRNA, where it helps stabilize the platform of the 30S subunit. The chain is Small ribosomal subunit protein bS18 from Rickettsia massiliae (strain Mtu5).